A 612-amino-acid chain; its full sequence is Actin-binding LIM protein 2 (612 aa).

4 consecutive LIM zinc-binding domains span residues 22-81 (ILCN…LYGT), 81-141 (TRCF…TLVG), 151-210 (RSCG…KFGI), and 210-270 (IRCD…ARTE). Zn(2+)-binding residues include Cys-83, Cys-86, His-103, Cys-106, Cys-109, Cys-112, Cys-131, and Cys-134. 8 residues coordinate Zn(2+): Cys-212, Cys-215, His-232, Cys-235, Cys-238, Cys-241, His-260, and Cys-263. The segment covering 269–278 (TEDKSKETRT) has biased composition (basic and acidic residues). Disordered regions lie at residues 269–295 (TEDK…SGSP) and 341–433 (AVGD…DNIY). 2 stretches are compositionally biased toward low complexity: residues 279–295 (SSES…SGSP) and 364–373 (SSPSSAGSVS). A phosphoserine mark is found at Ser-282, Ser-294, Ser-365, and Ser-368. The span at 394-416 (SGRSTPSLSVHSDSRPPSSTYQQ) shows a compositional bias: polar residues. Ser-453 carries the phosphoserine modification. Residues 471–520 (ADTRTNSPDLDSQSLSLSSGADQEPLQRMPGDSLYSRFPYSKPDTLPGPR) form a disordered region. Thr-473 is modified (phosphothreonine). Residues Ser-477 and Ser-579 each carry the phosphoserine modification. Over residues 477 to 489 (SPDLDSQSLSLSS) the composition is skewed to low complexity. The HP domain occupies 544–612 (TREYKIYPYD…NDLKKKALLF (69 aa)).

As to quaternary structure, interacts with F-actin and ABRA.

Its subcellular location is the cytoplasm. In terms of biological role, may act as scaffold protein. May stimulate ABRA activity and ABRA-dependent SRF transcriptional activity. The protein is Actin-binding LIM protein 2 (Ablim2) of Rattus norvegicus (Rat).